We begin with the raw amino-acid sequence, 157 residues long: UPF0127 protein TK1120 (157 aa).

It belongs to the UPF0127 family.

This chain is UPF0127 protein TK1120, found in Thermococcus kodakarensis (strain ATCC BAA-918 / JCM 12380 / KOD1) (Pyrococcus kodakaraensis (strain KOD1)).